A 202-amino-acid polypeptide reads, in one-letter code: P25 protein (202 aa).

Residues 7–195 form the Flavodoxin-like domain; sequence VAIVIYSTYG…EIARIQGETF (189 aa). The residue at position 181 (S181) is a Phosphoserine.

Belongs to the WrbA family. As to quaternary structure, homodimer.

Its function is as follows. Unknown. Target of pap1 transcription factor. Confers brefeldin A resistance in S.pombe. The polypeptide is P25 protein (obr1) (Schizosaccharomyces pombe (strain 972 / ATCC 24843) (Fission yeast)).